Reading from the N-terminus, the 423-residue chain is Probable efflux pump mfs2 (423 aa).

The next 11 helical transmembrane spans lie at 21–41, 49–69, 79–99, 111–131, 138–158, 220–240, 256–278, 295–315, 319–339, 360–380, and 392–411; these read TMALSVYLLATAFGPLIIGPV, SIFHITNIWFLVWNLVCGFAH, LLAGFGASAVYSLGYGVLGDV, LYLLIPLTGSAVGPIVSGFIV, WMFWSTAILQLTLDLSSLLFH, AILEGIDYGLLYFALSSFSAL, YIVICIGTVSGSQLCGPLMDYAY, IPLLLPGALITPIGFLLYGWA, HLIWVVVDVGAALLSLGMQIF, AATQVLRSLLAFAFPLFSNSL, and LLAFLSIGIALPATGILWRW.

It belongs to the major facilitator superfamily.

The protein resides in the membrane. Its function is as follows. Probable efflux pump; part of the gene cluster 27 that mediates the biosynthesis of asparasone A, a sclerotium-specific anthraquinone pigment important for sclerotial survival. This Aspergillus flavus (strain ATCC 200026 / FGSC A1120 / IAM 13836 / NRRL 3357 / JCM 12722 / SRRC 167) protein is Probable efflux pump mfs2.